Reading from the N-terminus, the 263-residue chain is UPF0246 protein Mmar10_0828 (263 aa).

The protein belongs to the UPF0246 family.

This Maricaulis maris (strain MCS10) (Caulobacter maris) protein is UPF0246 protein Mmar10_0828.